Reading from the N-terminus, the 634-residue chain is Chaperone protein DnaK (634 aa).

Phosphothreonine; by autocatalysis is present on T197. Over residues 515–528 the composition is skewed to basic and acidic residues; that stretch reads LHKEDDKKRKESVD. Disordered stretches follow at residues 515-536 and 595-634; these read LHKEDDKKRKESVDARNGADAI and YKAASAGKNAGGTAGGNGNAGSNGNSGAKKDDDVIDAEVE. Gly residues predominate over residues 603–615; that stretch reads NAGGTAGGNGNAG.

The protein belongs to the heat shock protein 70 family.

Its function is as follows. Acts as a chaperone. This is Chaperone protein DnaK from Campylobacter hominis (strain ATCC BAA-381 / DSM 21671 / CCUG 45161 / LMG 19568 / NCTC 13146 / CH001A).